The sequence spans 554 residues: Heterochromatin protein 1-binding protein 3 (554 aa).

A2 is modified (N-acetylalanine). S6 carries the post-translational modification Phosphoserine. Disordered stretches follow at residues 30–136 and 142–161; these read LGEK…KTIP and SASQ…SPRP. T51 carries the post-translational modification Phosphothreonine. Acidic residues predominate over residues 60–71; it reads GEEEKPEPDGSS. A Glycyl lysine isopeptide (Lys-Gly) (interchain with G-Cter in SUMO2) cross-link involves residue K64. 2 positions are modified to phosphothreonine: E72 and T85. Residues 72–93 are compositionally biased toward polar residues; it reads EESISTVEEQENETPPATSSEA. Positions 94–129 are enriched in basic and acidic residues; that stretch reads EQPKGEPESGEKEENNNKSAEEPKKDEKDQSKEKEK. K97 is covalently cross-linked (Glycyl lysine isopeptide (Lys-Gly) (interchain with G-Cter in SUMO2)). A compositionally biased stretch (polar residues) spans 142–156; the sequence is SASQLARAQRQTPMA. Phosphoserine occurs at positions 144, 157, and 158. One can recognise an H15 1 domain in the interval 159–234; it reads PRPKMDAILT…GASGSFVVVQ (76 aa). The residue at position 192 (K192) is an N6-acetyllysine. A disordered region spans residues 229 to 254; that stretch reads SFVVVQKSKPPQKSKNRKKGSALDPE. Over residues 238–248 the composition is skewed to basic residues; sequence PPQKSKNRKKG. Residue S249 is modified to Phosphoserine. Positions 255–259 match the PxVxL motif motif; sequence PQVKL. H15 domains follow at residues 255–330 and 337–413; these read PQVK…QLKK and LGGS…QLSF. K258 participates in a covalent cross-link: Glycyl lysine isopeptide (Lys-Gly) (interchain with G-Cter in SUMO2). The disordered stretch occupies residues 420-554; it reads GVLFPKKESG…AMKKSFKTKK (135 aa). Residues 430 to 451 show a composition bias toward acidic residues; sequence GSDDEDEDDDDDESSEDSEDEE. 3 positions are modified to phosphoserine: S443, S444, and S447. Polar residues predominate over residues 464–475; sequence AKSQGKTASMKQ. Basic residues-rich tracts occupy residues 490 to 511 and 544 to 554; these read GKVR…RKAR and SAMKKSFKTKK.

Interacts (via PxVxL motif) with CBX5 (via Trp-174).

The protein resides in the nucleus. The protein localises to the chromosome. In terms of biological role, component of heterochromatin that maintains heterochromatin integrity during G1/S progression and regulates the duration of G1 phase to critically influence cell proliferative capacity. May play a role in hypoxia-induced oncogenesis. The sequence is that of Heterochromatin protein 1-binding protein 3 (Hp1bp3) from Mus musculus (Mouse).